The following is a 98-amino-acid chain: Large ribosomal subunit protein uL23 (98 aa).

The protein belongs to the universal ribosomal protein uL23 family. Part of the 50S ribosomal subunit. Contacts protein L29, and trigger factor when it is bound to the ribosome.

Functionally, one of the early assembly proteins it binds 23S rRNA. One of the proteins that surrounds the polypeptide exit tunnel on the outside of the ribosome. Forms the main docking site for trigger factor binding to the ribosome. This Bifidobacterium longum (strain DJO10A) protein is Large ribosomal subunit protein uL23.